The sequence spans 964 residues: Chromatin assembly factor 1 subunit A (964 aa).

The segment at Met1 to Lys49 is binds to PCNA. The binds to CBX1 chromo shadow domain stretch occupies residues Met1 to Ala316. Ser126, Ser141, and Ser144 each carry phosphoserine. Positions Ala146–Gly232 are disordered. The segment covering Lys156–Leu172 has biased composition (basic and acidic residues). Lys185 participates in a covalent cross-link: Glycyl lysine isopeptide (Lys-Gly) (interchain with G-Cter in SUMO1); alternate. Lys185 is covalently cross-linked (Glycyl lysine isopeptide (Lys-Gly) (interchain with G-Cter in SUMO2); alternate). The short motif at Phe236–Leu249 is the PxVxL motif element. 2 disordered regions span residues Pro253–Glu437 and Asp601–Gly641. A compositionally biased stretch (low complexity) spans Leu284–Pro298. Position 312 is a phosphoserine (Ser312). A coiled-coil region spans residues Arg329–Lys453. The segment covering Ser331–Glu437 has biased composition (basic and acidic residues). 2 stretches are compositionally biased toward acidic residues: residues Asp601 to Gly612 and Gly620 to Gly635. A necessary for homodimerization and competence for chromatin assembly region spans residues Ser644–Phe680. Residues Arg662 to Ser964 are binds to p60. Thr723 carries the phosphothreonine modification. The tract at residues Arg769–Ala799 is disordered. Residues Asp770–Ser780 show a composition bias toward low complexity. Phosphoserine occurs at positions 773, 783, 811, 876, and 881. The tract at residues Glu859–Lys878 is disordered. 2 disordered regions span residues Asp897–Gly920 and Ile933–Ser964. The segment covering Asp904 to Gly920 has biased composition (acidic residues). Positions Met949–Ser964 are enriched in polar residues. A Phosphoserine modification is found at Ser959.

The protein belongs to the CHAF1A family. As to quaternary structure, homodimer. Part of the CAF-1 complex that contains RBBP4, CHAF1B and CHAF1A. CHAF1A binds directly to CHAF1B. Only minor amounts of RBBP4 are complexed with CHAF1A and CHAF1B in G1 phase. Interacts with PCNA; the interaction is direct. Interacts (via the PxVxL motif) with CBX5; the interaction is direct. Interacts with MBD1. Interacts with histones H3.1, H3.2 and H3.1t.

Its subcellular location is the nucleus. Acts as a component of the histone chaperone complex chromatin assembly factor 1 (CAF-1), which assembles histone octamers onto DNA during replication and repair. CAF-1 performs the first step of the nucleosome assembly process, bringing newly synthesized histones H3 and H4 to replicating DNA; histones H2A/H2B can bind to this chromatin precursor subsequent to DNA replication to complete the histone octamer. It may play a role in heterochromatin maintenance in proliferating cells by bringing newly synthesized cbx proteins to heterochromatic DNA replication foci. This chain is Chromatin assembly factor 1 subunit A (CHAF1A), found in Bos taurus (Bovine).